Reading from the N-terminus, the 192-residue chain is Xanthine phosphoribosyltransferase (192 aa).

Positions 20 and 27 each coordinate xanthine. Position 128–132 (Ala-128–Ala-132) interacts with 5-phospho-alpha-D-ribose 1-diphosphate. Residue Lys-156 participates in xanthine binding.

Belongs to the purine/pyrimidine phosphoribosyltransferase family. Xpt subfamily. In terms of assembly, homodimer.

It localises to the cytoplasm. It catalyses the reaction XMP + diphosphate = xanthine + 5-phospho-alpha-D-ribose 1-diphosphate. Its pathway is purine metabolism; XMP biosynthesis via salvage pathway; XMP from xanthine: step 1/1. Functionally, converts the preformed base xanthine, a product of nucleic acid breakdown, to xanthosine 5'-monophosphate (XMP), so it can be reused for RNA or DNA synthesis. The polypeptide is Xanthine phosphoribosyltransferase (Listeria monocytogenes serotype 4b (strain CLIP80459)).